Reading from the N-terminus, the 1040-residue chain is Beta-galactosidase (1040 aa).

Asparagine 111 and aspartate 210 together coordinate substrate. A Na(+)-binding site is contributed by aspartate 210. Residues glutamate 427, histidine 429, and glutamate 472 each contribute to the Mg(2+) site. Substrate is bound by residues glutamate 472 and 548-551; that span reads EYAH. Residue glutamate 472 is the Proton donor of the active site. The active-site Nucleophile is glutamate 548. A Mg(2+)-binding site is contributed by asparagine 608. Phenylalanine 612 and aspartate 615 together coordinate Na(+). Substrate is bound by residues aspartate 615 and tryptophan 1016.

This sequence belongs to the glycosyl hydrolase 2 family. As to quaternary structure, homotetramer. The cofactor is Mg(2+). It depends on Na(+) as a cofactor.

The enzyme catalyses Hydrolysis of terminal non-reducing beta-D-galactose residues in beta-D-galactosides.. The polypeptide is Beta-galactosidase (Pectobacterium atrosepticum (strain SCRI 1043 / ATCC BAA-672) (Erwinia carotovora subsp. atroseptica)).